The following is a 349-amino-acid chain: Nicotinate-nucleotide--dimethylbenzimidazole phosphoribosyltransferase (349 aa).

Positions 1–20 (MEFATVSPPDPGTAAAARAR) are disordered. Residue E313 is the Proton acceptor of the active site.

This sequence belongs to the CobT family.

It carries out the reaction 5,6-dimethylbenzimidazole + nicotinate beta-D-ribonucleotide = alpha-ribazole 5'-phosphate + nicotinate + H(+). Its pathway is nucleoside biosynthesis; alpha-ribazole biosynthesis; alpha-ribazole from 5,6-dimethylbenzimidazole: step 1/2. Functionally, catalyzes the synthesis of alpha-ribazole-5'-phosphate from nicotinate mononucleotide (NAMN) and 5,6-dimethylbenzimidazole (DMB). The protein is Nicotinate-nucleotide--dimethylbenzimidazole phosphoribosyltransferase of Mycolicibacterium paratuberculosis (strain ATCC BAA-968 / K-10) (Mycobacterium paratuberculosis).